A 445-amino-acid polypeptide reads, in one-letter code: UDP-N-acetylmuramate--L-alanine ligase (445 aa).

Position 108 to 114 (108 to 114 (GSDGKTT)) interacts with ATP.

Belongs to the MurCDEF family.

Its subcellular location is the cytoplasm. It catalyses the reaction UDP-N-acetyl-alpha-D-muramate + L-alanine + ATP = UDP-N-acetyl-alpha-D-muramoyl-L-alanine + ADP + phosphate + H(+). The protein operates within cell wall biogenesis; peptidoglycan biosynthesis. Its function is as follows. Cell wall formation. This Pseudothermotoga lettingae (strain ATCC BAA-301 / DSM 14385 / NBRC 107922 / TMO) (Thermotoga lettingae) protein is UDP-N-acetylmuramate--L-alanine ligase.